Here is a 311-residue protein sequence, read N- to C-terminus: MSETLATPPAALHTWLSRWRQFSALTKPRVVQLIVFCAAIGMLLAVPGWPSLPAWGVALAASIGIWLVASAAAAFNCLVEQTIDSKMKRTAWRPTAKGELSNTQTLSFAVLLCAAGMAVLWVWVNALTMWLTFATFVGYAVIYTVLLKPATPQNIVIGGASGAMPPVLGWAAMRGELGAEPWILCLIIFLWTPPHFWALALYRAEDYARAGLPMLPVTHGNDFTRLQILLYTFVLFAATLLPFVYGMSGWFYLVAACALGVGFCGHAFRLWRHYSEALARRTFRFSIWHLSLLFAALLLDHYLGPLLRGTP.

8 helical membrane-spanning segments follow: residues 30-50 (VVQLIVFCAAIGMLLAVPGWP), 55-75 (WGVALAASIGIWLVASAAAAF), 108-128 (FAVLLCAAGMAVLWVWVNALT), 129-149 (MWLTFATFVGYAVIYTVLLKP), 153-173 (QNIVIGGASGAMPPVLGWAAM), 182-202 (WILCLIIFLWTPPHFWALALY), 233-253 (FVLFAATLLPFVYGMSGWFYL), and 287-307 (IWHLSLLFAALLLDHYLGPLL).

The protein belongs to the UbiA prenyltransferase family. Protoheme IX farnesyltransferase subfamily.

The protein localises to the cell inner membrane. The catalysed reaction is heme b + (2E,6E)-farnesyl diphosphate + H2O = Fe(II)-heme o + diphosphate. Its pathway is porphyrin-containing compound metabolism; heme O biosynthesis; heme O from protoheme: step 1/1. Functionally, converts heme B (protoheme IX) to heme O by substitution of the vinyl group on carbon 2 of heme B porphyrin ring with a hydroxyethyl farnesyl side group. The protein is Protoheme IX farnesyltransferase of Methylibium petroleiphilum (strain ATCC BAA-1232 / LMG 22953 / PM1).